Reading from the N-terminus, the 132-residue chain is MSMSDPLGDMLTRIRNAISRKKSKVVTPASKLRARVLDVLKLEGYICGYNQIDSGNGKFEFEIELKYFENSSVIRTISRISKPGRRVYVSTKSILQVANGLGISILSTPKGVMTDHEAREQNVGGELLCRVF.

Belongs to the universal ribosomal protein uS8 family. Part of the 30S ribosomal subunit. Contacts proteins S5 and S12.

Functionally, one of the primary rRNA binding proteins, it binds directly to 16S rRNA central domain where it helps coordinate assembly of the platform of the 30S subunit. In Bartonella bacilliformis (strain ATCC 35685 / KC583 / Herrer 020/F12,63), this protein is Small ribosomal subunit protein uS8.